The primary structure comprises 1258 residues: Serine/threonine-protein kinase Nek1 (1258 aa).

The Protein kinase domain maps to tyrosine 4–isoleucine 258. ATP-binding positions include isoleucine 10–alanine 18 and lysine 33. The active-site Proton acceptor is the aspartate 128. Threonine 156 is modified (phosphothreonine). Threonine 162 carries the post-translational modification Phosphothreonine; by autocatalysis. The tract at residues histidine 330–glutamate 360 is disordered. Residues threonine 344–glutamate 360 are compositionally biased toward basic and acidic residues. Serine 414, serine 418, serine 428, and serine 438 each carry phosphoserine. 3 disordered regions span residues lysine 578–methionine 600, lysine 648–glutamine 669, and valine 685–asparagine 704. Basic and acidic residues predominate over residues leucine 579–glycine 591. Serine 653 is subject to Phosphoserine. Threonine 661 carries the phosphothreonine modification. Serine 664 carries the post-translational modification Phosphoserine. The span at aspartate 691–glutamine 700 shows a compositional bias: basic and acidic residues. Phosphoserine is present on residues serine 798, serine 834, serine 868, serine 881, serine 1052, and serine 1126. The segment at arginine 1118–glycine 1171 is disordered.

The protein belongs to the protein kinase superfamily. NEK Ser/Thr protein kinase family. NIMA subfamily. As to quaternary structure, binds to CBY2. Found in a complex with CFAP410, NEK1 and SPATA7. Interacts with CFAP410. Interacts (via Ser-1052 phosphorylated form) with 14-3-3 proteins. Mg(2+) is required as a cofactor. As to expression, high fetal expression in the brain and kidney.

Its subcellular location is the nucleus. The protein resides in the cytoplasm. It localises to the cytoskeleton. It is found in the microtubule organizing center. The protein localises to the centrosome. It catalyses the reaction L-seryl-[protein] + ATP = O-phospho-L-seryl-[protein] + ADP + H(+). It carries out the reaction L-threonyl-[protein] + ATP = O-phospho-L-threonyl-[protein] + ADP + H(+). Phosphorylates serines and threonines, but also appears to possess tyrosine kinase activity. Involved in DNA damage checkpoint control and for proper DNA damage repair. In response to injury that includes DNA damage, NEK1 phosphorylates VDAC1 to limit mitochondrial cell death. May be implicated in the control of meiosis. Involved in cilium assembly. The protein is Serine/threonine-protein kinase Nek1 (NEK1) of Homo sapiens (Human).